Here is a 151-residue protein sequence, read N- to C-terminus: Large ribosomal subunit protein bL9 (151 aa).

This sequence belongs to the bacterial ribosomal protein bL9 family.

Binds to the 23S rRNA. The sequence is that of Large ribosomal subunit protein bL9 from Prochlorococcus marinus (strain MIT 9312).